Here is a 334-residue protein sequence, read N- to C-terminus: Probable N5-carboxyaminoimidazole ribonucleotide mutase (334 aa).

3 residues coordinate substrate: S11, D14, and R41.

It belongs to the AIR carboxylase family. Class I subfamily.

The catalysed reaction is 5-carboxyamino-1-(5-phospho-D-ribosyl)imidazole + H(+) = 5-amino-1-(5-phospho-D-ribosyl)imidazole-4-carboxylate. It functions in the pathway purine metabolism; IMP biosynthesis via de novo pathway; 5-amino-1-(5-phospho-D-ribosyl)imidazole-4-carboxylate from 5-amino-1-(5-phospho-D-ribosyl)imidazole (N5-CAIR route): step 2/2. In terms of biological role, catalyzes the conversion of N5-carboxyaminoimidazole ribonucleotide (N5-CAIR) to 4-carboxy-5-aminoimidazole ribonucleotide (CAIR). This Methanothermobacter thermautotrophicus (strain ATCC 29096 / DSM 1053 / JCM 10044 / NBRC 100330 / Delta H) (Methanobacterium thermoautotrophicum) protein is Probable N5-carboxyaminoimidazole ribonucleotide mutase.